Consider the following 295-residue polypeptide: Apolipoprotein E (295 aa).

Residues 1–18 (MKVLWAALLVTFLAGCQA) form the signal peptide. A run of 6 repeats spans residues 80–101 (TLMDETMKELKAYKSELEEQLS), 102–123 (PVAEETRARLSKELQAAQARLG), 124–145 (ADMEDVRSRLVQYRSEVQAMLG), 146–167 (QSTEELRARLASHLRKLRKRLL), 193–211 (TVGSLASQPLQERAQAKLR), and 212–233 (ARMEEMGSRTRDRLDEVKEQVA). Residues 80 to 233 (TLMDETMKEL…RLDEVKEQVA (154 aa)) are 6 X 22 AA approximate tandem repeats. Methionine sulfoxide is present on methionine 143. Residue serine 147 is modified to Phosphoserine. Residues 158 to 168 (HLRKLRKRLLR) are LDL and other lipoprotein receptors binding. Residue 162–165 (LRKR) participates in heparin binding. The tract at residues 191–268 (AATVGSLASQ…SWFEPLVEDM (78 aa)) is lipid-binding and lipoprotein association. The segment at 244-295 (QQISLQAEAFQARLKSWFEPLVEDMQRQWAGLVEKVQAAVGASTAPVPSDNH) is homooligomerization. Positions 256–268 (RLKSWFEPLVEDM) are specificity for association with VLDL.

The protein belongs to the apolipoprotein A1/A4/E family. In terms of assembly, homotetramer. May interact with ABCA1; functionally associated with ABCA1 in the biogenesis of HDLs. May interact with APP/A4 amyloid-beta peptide; the interaction is extremely stable in vitro but its physiological significance is unclear. May interact with MAPT. May interact with MAP2. In the cerebrospinal fluid, interacts with secreted SORL1. Interacts with PMEL; this allows the loading of PMEL luminal fragment on ILVs to induce fibril nucleation. In terms of processing, APOE exists as multiple glycosylated and sialylated glycoforms within cells and in plasma. The extent of glycosylation and sialylation are tissue and context specific. Post-translationally, glycated in plasma VLDL. Phosphorylated by FAM20C in the extracellular medium.

The protein resides in the secreted. Its subcellular location is the extracellular space. It localises to the extracellular matrix. The protein localises to the extracellular vesicle. It is found in the endosome. The protein resides in the multivesicular body. Its function is as follows. APOE is an apolipoprotein, a protein associating with lipid particles, that mainly functions in lipoprotein-mediated lipid transport between organs via the plasma and interstitial fluids. APOE is a core component of plasma lipoproteins and is involved in their production, conversion and clearance. Apolipoproteins are amphipathic molecules that interact both with lipids of the lipoprotein particle core and the aqueous environment of the plasma. As such, APOE associates with chylomicrons, chylomicron remnants, very low density lipoproteins (VLDL) and intermediate density lipoproteins (IDL) but shows a preferential binding to high-density lipoproteins (HDL). It also binds a wide range of cellular receptors including the LDL receptor/LDLR, the LDL receptor-related proteins LRP1, LRP2 and LRP8 and the very low-density lipoprotein receptor/VLDLR that mediate the cellular uptake of the APOE-containing lipoprotein particles. Finally, APOE also has a heparin-binding activity and binds heparan-sulfate proteoglycans on the surface of cells, a property that supports the capture and the receptor-mediated uptake of APOE-containing lipoproteins by cells. A main function of APOE is to mediate lipoprotein clearance through the uptake of chylomicrons, VLDLs, and HDLs by hepatocytes. APOE is also involved in the biosynthesis by the liver of VLDLs as well as their uptake by peripheral tissues ensuring the delivery of triglycerides and energy storage in muscle, heart and adipose tissues. By participating in the lipoprotein-mediated distribution of lipids among tissues, APOE plays a critical role in plasma and tissues lipid homeostasis. APOE is also involved in two steps of reverse cholesterol transport, the HDLs-mediated transport of cholesterol from peripheral tissues to the liver, and thereby plays an important role in cholesterol homeostasis. First, it is functionally associated with ABCA1 in the biogenesis of HDLs in tissues. Second, it is enriched in circulating HDLs and mediates their uptake by hepatocytes. APOE also plays an important role in lipid transport in the central nervous system, regulating neuron survival and sprouting. The sequence is that of Apolipoprotein E (APOE) from Macaca mulatta (Rhesus macaque).